The chain runs to 316 residues: GPI-specific phospholipase A2-like PGAP3 (316 aa).

The first 18 residues, 1-18, serve as a signal peptide directing secretion; it reads MAPFLVLFLAGVVAASRG. Over 19 to 93 the chain is Lumenal; the sequence is DREPVYRDCV…QFHGKWPFSR (75 aa). A glycan (N-linked (GlcNAc...) asparagine) is linked at asparagine 35. A helical transmembrane segment spans residues 94 to 114; sequence FLFFQEPASALASFLNGVASL. Residues 115–132 lie on the Cytoplasmic side of the membrane; it reads LMLLRYRSSVPSSCQMYR. Residues 133–153 traverse the membrane as a helical segment; it reads TCLAFSMVSVNAWFWSTIFHT. Over 154 to 163 the chain is Lumenal; sequence RDTALTEKMD. The chain crosses the membrane as a helical span at residues 164–180; sequence YFCASSVILHSIYLCCM. Residues 181-182 lie on the Cytoplasmic side of the membrane; the sequence is RT. Residues 183–203 form a helical membrane-spanning segment; that stretch reads FGLQYPSIANGFGAFLVLLFA. Topologically, residues 204-218 are lumenal; the sequence is CHVSYLTLGRFDYSY. A helical membrane pass occupies residues 219 to 239; it reads NMAANTGFGVLNLMWWLAWCF. At 240–251 the chain is on the cytoplasmic side; that stretch reads RRRFHQPYLWKC. Residues 252 to 272 traverse the membrane as a helical segment; the sequence is VLVVISLQSLALLELLDFPPV. Position 273 (methionine 273) is a topological domain, lumenal. The helical transmembrane segment at 274-293 threads the bilayer; it reads WILDAHALWHFSTVPLHFLF. The Cytoplasmic segment spans residues 294 to 316; it reads YSFLKDDSLYLLKINHDDIPKLD.

It belongs to the PGAP3 family.

Its subcellular location is the golgi apparatus membrane. Involved in the fatty acid remodeling steps of GPI-anchor maturation where the unsaturated acyl chain at sn-2 of inositol phosphate is replaced by a saturated stearoyl chain. May catalyze the first step of the fatty acid remodeling, by removing the unsaturated acyl chain at sn-2 of inositol phosphate, generating a lyso-GPI intermediate. The fatty acid remodeling steps is critical for the integration of GPI-APs into lipid rafts. In Xenopus tropicalis (Western clawed frog), this protein is GPI-specific phospholipase A2-like PGAP3.